Here is a 72-residue protein sequence, read N- to C-terminus: Cell division protein ZapB (72 aa).

Residues 5–71 are a coiled coil; that stretch reads ILDQLEEKIK…LRSLLGQIDN (67 aa).

The protein belongs to the ZapB family. Homodimer. The ends of the coiled-coil dimer bind to each other, forming polymers. Interacts with FtsZ.

It is found in the cytoplasm. Its function is as follows. Non-essential, abundant cell division factor that is required for proper Z-ring formation. It is recruited early to the divisome by direct interaction with FtsZ, stimulating Z-ring assembly and thereby promoting cell division earlier in the cell cycle. Its recruitment to the Z-ring requires functional FtsA or ZipA. In Actinobacillus pleuropneumoniae serotype 5b (strain L20), this protein is Cell division protein ZapB.